Reading from the N-terminus, the 299-residue chain is F-actin-capping protein subunit alpha-3 (299 aa).

Phosphoserine is present on residues Ser2 and Ser290.

Belongs to the F-actin-capping protein alpha subunit family. Component of the F-actin capping complex, composed of a heterodimer of an alpha and a beta subunit. Component of the WASH complex, composed of F-actin-capping protein subunit alpha (CAPZA1, CAPZA2 or CAPZA3), F-actin-capping protein subunit beta (CAPZB), WASHC1, WASHC2, WASHC3, WASHC4 and WASHC5. In terms of tissue distribution, exclusively expressed in the testis.

It is found in the cytoplasm. The protein resides in the cytoskeleton. F-actin-capping proteins bind in a Ca(2+)-independent manner to the fast growing ends of actin filaments (barbed end) thereby blocking the exchange of subunits at these ends. Unlike other capping proteins (such as gelsolin and severin), these proteins do not sever actin filaments. May play a role in the morphogenesis of spermatid. The sequence is that of F-actin-capping protein subunit alpha-3 (Capza3) from Mus musculus (Mouse).